The sequence spans 429 residues: Adenylosuccinate synthetase (429 aa).

GTP contacts are provided by residues 12 to 18 and 40 to 42; these read GDEGKGK and GHT. The active-site Proton acceptor is the aspartate 13. Residues aspartate 13 and glycine 40 each contribute to the Mg(2+) site. Residues 13 to 16, 38 to 41, threonine 128, arginine 142, glutamine 223, threonine 238, and arginine 302 contribute to the IMP site; these read DEGK and NAGH. Catalysis depends on histidine 41, which acts as the Proton donor. Residue 298–304 participates in substrate binding; sequence VNTGRKR. GTP-binding positions include arginine 304, 330 to 332, and 412 to 414; these read KLD and GVG.

It belongs to the adenylosuccinate synthetase family. In terms of assembly, homodimer. The cofactor is Mg(2+).

Its subcellular location is the cytoplasm. It carries out the reaction IMP + L-aspartate + GTP = N(6)-(1,2-dicarboxyethyl)-AMP + GDP + phosphate + 2 H(+). It participates in purine metabolism; AMP biosynthesis via de novo pathway; AMP from IMP: step 1/2. In terms of biological role, plays an important role in the de novo pathway of purine nucleotide biosynthesis. Catalyzes the first committed step in the biosynthesis of AMP from IMP. This Corynebacterium efficiens (strain DSM 44549 / YS-314 / AJ 12310 / JCM 11189 / NBRC 100395) protein is Adenylosuccinate synthetase.